We begin with the raw amino-acid sequence, 79 residues long: MDIKSEVLAIIDDLFMEDVSSMMDEDLFDAGVLDSMGTVELIVELESHFNIDIPIAEFGRNDWNTANKIVAGVTELCNA.

The Carrier domain maps to 1–77 (MDIKSEVLAI…KIVAGVTELC (77 aa)). S35 carries the O-(pantetheine 4'-phosphoryl)serine modification.

This sequence belongs to the DltC family. 4'-phosphopantetheine is transferred from CoA to a specific serine of apo-DCP.

Its subcellular location is the cytoplasm. Its pathway is cell wall biogenesis; lipoteichoic acid biosynthesis. Carrier protein involved in the D-alanylation of lipoteichoic acid (LTA). The loading of thioester-linked D-alanine onto DltC is catalyzed by D-alanine--D-alanyl carrier protein ligase DltA. The DltC-carried D-alanyl group is further transferred to cell membrane phosphatidylglycerol (PG) by forming an ester bond, probably catalyzed by DltD. D-alanylation of LTA plays an important role in modulating the properties of the cell wall in Gram-positive bacteria, influencing the net charge of the cell wall. In Streptococcus agalactiae serotype Ia (strain ATCC 27591 / A909 / CDC SS700), this protein is D-alanyl carrier protein.